A 57-amino-acid polypeptide reads, in one-letter code: Small ribosomal subunit protein bS21 (57 aa).

Positions 34-57 are disordered; sequence RKEHYIKPSVQKKNRQKNMRSKKR. Basic residues predominate over residues 43–57; it reads VQKKNRQKNMRSKKR.

The protein belongs to the bacterial ribosomal protein bS21 family.

The chain is Small ribosomal subunit protein bS21 from Aster yellows witches'-broom phytoplasma (strain AYWB).